Reading from the N-terminus, the 322-residue chain is MDSIHGHYHIQLSNYSAGENLQSATLTEGVIGAHRVKVETALSHSNRQKKLSATIKHNQSSRSMLDRKLTSDGKVNQRSSFTFSMIMYRMIHFVLSTRVPAVRESVANYGGNINFKFAQTKGAFLHQIIKHSDTARGACEALCAHWIRSHAQGQSLFDQLYVGGRKGKFQIDTLYSIKQLQIDGCKADVDQDEVTLDWLKKNGISERMIERHCLLPTVDVTGTTGSEGPDQLLNAILDTHGIGYGYKKIYLSGQMSGHTIAAYVNENSGVTFFDPNFGEFHFSDKEQFSKWFTNSFWENSMYHYPLGVGQSFSVFTFDSKEV.

Residues Cys139, His258, and Asp274 contribute to the active site.

It belongs to the peptidase C58 family. Interacts with human ARHA.

Its subcellular location is the secreted. In terms of biological role, cysteine protease, which is translocated into infected cells and plays a central role in pathogenesis by cleaving the C-terminus end of the human small GTPase RhoA/ARHA, a regulator of cytoskeleton. Once cleaved, ARHA loses its lipid modification, and is released from the cell membrane, leading to the subsequent disruption of actin cytoskeleton of the host cell. This Yersinia enterocolitica protein is Cysteine protease yopT1 (yopT1).